The sequence spans 208 residues: MAKGILGTKLGMTQIFNEAGEVVPVTVVAVEGNVVLQLKTVDTDGYEAVQLGFGDIKESRQNKPSKGHAAKANATPKRFIKEVRTSVEGYEIGQEIKADIFAAGELVDVTGTSKGKGFQGAIKRHGQSRGPMAHGSRYHRRPGSMGPVAPNRVFKGKLLPGQMGGERKTIQNLEVVKVDVERGLLLVKGAIPGARKSNVIIKSAVKGN.

The tract at residues 117–149 (GFQGAIKRHGQSRGPMAHGSRYHRRPGSMGPVA) is disordered.

The protein belongs to the universal ribosomal protein uL3 family. In terms of assembly, part of the 50S ribosomal subunit. Forms a cluster with proteins L14 and L19.

In terms of biological role, one of the primary rRNA binding proteins, it binds directly near the 3'-end of the 23S rRNA, where it nucleates assembly of the 50S subunit. This is Large ribosomal subunit protein uL3 from Exiguobacterium sp. (strain ATCC BAA-1283 / AT1b).